The following is an 85-amino-acid chain: uncharacterized protein (85 aa).

An N-terminal signal peptide occupies residues Met1–Ala21. The span at Asp22–Glu35 shows a compositional bias: basic and acidic residues. The interval Asp22–Leu85 is disordered. Residues Arg36–Gly51 show a composition bias toward low complexity.

It localises to the secreted. This is an uncharacterized protein from Homo sapiens (Human).